Here is a 463-residue protein sequence, read N- to C-terminus: Xanthine permease XanP (463 aa).

A run of 12 helical transmembrane segments spans residues 43–63 (LLAM…ALGL), 71–91 (IISM…KAWG), 93–113 (VGSG…PLIM), 126–146 (PTMM…EMVI), 156–176 (IITP…LIQV), 192–212 (TFGA…IILL), 222–242 (VASL…MGML), 260–280 (LYYG…VFMI), 352–372 (GFVV…SGFV), 379–399 (VLGG…VRIV), 409–429 (ILII…PLIL), and 439–459 (LLSS…LIFP).

Belongs to the nucleobase:cation symporter-2 (NCS2) (TC 2.A.40) family.

Its subcellular location is the cell inner membrane. The catalysed reaction is xanthine(in) + H(+)(in) = xanthine(out) + H(+)(out). Specific, proton motive force-dependent high-affinity transporter for xanthine. The sequence is that of Xanthine permease XanP (xanP) from Escherichia coli O6:H1 (strain CFT073 / ATCC 700928 / UPEC).